The following is a 398-amino-acid chain: Cholinephosphotransferase 1 (398 aa).

The residue at position 2 (alanine 2) is an N-acetylalanine. Residues 2–62 lie on the Cytoplasmic side of the membrane; that stretch reads AAGAGARPAP…LLQWIPLWIA (61 aa). The helical transmembrane segment at 63-83 threads the bilayer; sequence PNTITLFGLAINLFTTLVLIF. Residue asparagine 64 participates in CDP-choline binding. At 84 to 93 the chain is on the lumenal side; sequence YCPTVTEEAP. A helical membrane pass occupies residues 94–118; it reads YWTYLLCALGLFIYQSLDAIDGKQA. Mg(2+) is bound by residues aspartate 111 and aspartate 114. A CDP-choline-binding site is contributed by arginine 119. Residues 119 to 125 lie on the Cytoplasmic side of the membrane; the sequence is RRTNSCS. A helical membrane pass occupies residues 126–150; that stretch reads PLGELFDHGCDSLSTVFMAIGASIA. Position 132 (aspartate 132) interacts with Mg(2+). The Proton acceptor role is filled by histidine 133. Aspartate 136 is a binding site for Mg(2+). Over 151–160 the chain is Lumenal; the sequence is VRLGTHPDWL. Residues 161 to 179 form a helical membrane-spanning segment; it reads FFCSFVGMFMFYCAHWQTY. Residues 180–190 are Cytoplasmic-facing; it reads VSGVLRFGRVD. The chain crosses the membrane as a helical span at residues 191-207; the sequence is VTEIQVALVIVFLLSTF. Residues 208–222 are Lumenal-facing; sequence GGAMMWDYTIPILEI. A helical transmembrane segment spans residues 223–248; sequence KLKILPVLGVVGGLIFSCSNYFHVIL. The Cytoplasmic portion of the chain corresponds to 249–265; sequence HGGVGKNGSTIAGTSVL. A helical membrane pass occupies residues 266–281; the sequence is SPGLHIGLIIILAIMI. The Lumenal segment spans residues 282–293; it reads YKKSATNVFEKH. Residues 294-316 form a helical membrane-spanning segment; the sequence is PCLYTLMFGCVFAKVAQKLVIAH. Over 317 to 329 the chain is Cytoplasmic; it reads MTKSELYLQDTVF. The helical transmembrane segment at 330 to 339 threads the bilayer; sequence IGPGLLFLDQ. Residues 340 to 346 lie on the Lumenal side of the membrane; it reads YFNNFID. The helical transmembrane segment at 347–376 threads the bilayer; that stretch reads EYVVLWIAMVITSFDMMIYFSSLCLQISRH. The Cytoplasmic segment spans residues 377–398; that stretch reads LHLSIFKTSYQQAPEQVHKHID.

The protein belongs to the CDP-alcohol phosphatidyltransferase class-I family. It depends on Mg(2+) as a cofactor. Mn(2+) is required as a cofactor.

The protein resides in the golgi apparatus membrane. It carries out the reaction CDP-choline + a 1,2-diacyl-sn-glycerol = a 1,2-diacyl-sn-glycero-3-phosphocholine + CMP + H(+). It catalyses the reaction 1-octadecanoyl-2-(5Z,8Z,11Z,14Z-eicosatetraenoyl)-sn-glycerol + CDP-choline = 1-octadecanoyl-2-(5Z,8Z,11Z,14Z-eicosatetraenoyl)-sn-glycero-3-phosphocholine + CMP + H(+). The enzyme catalyses 1-hexadecanoyl-2-(9Z-octadecenoyl)-sn-glycerol + CDP-choline = 1-hexadecanoyl-2-(9Z-octadecenoyl)-sn-glycero-3-phosphocholine + CMP + H(+). The catalysed reaction is 1-hexadecanoyl-2-(4Z,7Z,10Z,13Z,16Z,19Z-docosahexaenoyl)-sn-glycerol + CDP-choline = 1-hexadecanoyl-2-(4Z,7Z,10Z,13Z,16Z,19Z-docosahexaenoyl)-sn-glycero-3-phosphocholine + CMP + H(+). It carries out the reaction 1,2-dioctanoyl-sn-glycerol + CDP-choline = 1,2-dioctanoyl-sn-glycero-3-phosphocholine + CMP + H(+). Its pathway is phospholipid metabolism; phosphatidylcholine biosynthesis; phosphatidylcholine from phosphocholine: step 2/2. In terms of biological role, catalyzes the final step of de novo phosphatidylcholine (PC) synthesis, i.e. the transfer of choline phosphate from CDP-choline to the free hydroxyl of a diacylglycerol (DAG), producing a PC. It thereby plays a central role in the formation and maintenance of vesicular membranes. The sequence is that of Cholinephosphotransferase 1 from Rattus norvegicus (Rat).